Here is a 151-residue protein sequence, read N- to C-terminus: UPF0178 protein Caul_3070 (151 aa).

This sequence belongs to the UPF0178 family.

The polypeptide is UPF0178 protein Caul_3070 (Caulobacter sp. (strain K31)).